The following is a 117-amino-acid chain: MQNIPPQVQSMLAQLESYQQQLQLLVQQKQKVQLELNEAKKALEEIEKLPDDAVIYKTVGTLIVKTEKAKAVEELKEKVETLEVRLNALERQEKKLNEKLKELTAKIQASLKPPVAG.

Belongs to the prefoldin subunit beta family. As to quaternary structure, heterohexamer of two alpha and four beta subunits.

It is found in the cytoplasm. Functionally, molecular chaperone capable of stabilizing a range of proteins. Seems to fulfill an ATP-independent, HSP70-like function in archaeal de novo protein folding. This is Prefoldin subunit beta from Thermococcus gammatolerans (strain DSM 15229 / JCM 11827 / EJ3).